The sequence spans 49 residues: Light-harvesting protein B800/850/890 alpha-3 chain (49 aa).

Residues 1–14 (MNQARIWLVVKPSV) lie on the Cytoplasmic side of the membrane. Residues 15-35 (GLPLLLGVVLLIALLVHGAIL) form a helical membrane-spanning segment. Residue histidine 31 coordinates a bacteriochlorophyll. Topologically, residues 36 to 49 (TNTSWYPTYFEGNW) are periplasmic.

This sequence belongs to the antenna complex alpha subunit family. As to quaternary structure, the core complex is formed by different alpha and beta chains, binding bacteriochlorophyll molecules, and arranged most probably in tetrameric structures disposed around the reaction center. The non-pigmented gamma chains may constitute additional components.

It is found in the cell inner membrane. In terms of biological role, antenna complexes are light-harvesting systems, which transfer the excitation energy to the reaction centers. The protein is Light-harvesting protein B800/850/890 alpha-3 chain of Halorhodospira halophila (strain DSM 244 / SL1) (Ectothiorhodospira halophila (strain DSM 244 / SL1)).